A 328-amino-acid polypeptide reads, in one-letter code: MISIERLSKTYPQGGLPMVALEEVSLEIPTGSVFGIVGRSGAGKSTLIRCLNLLERPTSGRIQVDGRELTTLSDRELRLQRQNIGMIFQNFHLLHSRNVWDNIAVGLEIIGMPKAQRQQRVAELLDLVGLSDKAYAFPSQLSGGQKQRVGIARALAAKPSYLLSDEATSALDPETTASILALLSDINRQLGLTIVLITHELDVVKSICDNAALLETGRVVETGAIADLLSDPLSRLGRSLLPTCGPLSVSATPRAELTFFDTLAASPVLSALAQQHAVGVTLLGGGVEFIGGQRVGRLHVDFNRPEGGLNLAEVLQFLNDRGVRAELI.

An ABC transporter domain is found at 2 to 241 (ISIERLSKTY…PLSRLGRSLL (240 aa)). 38–45 (GRSGAGKS) provides a ligand contact to ATP.

Belongs to the ABC transporter superfamily. Methionine importer (TC 3.A.1.24) family. In terms of assembly, the complex is composed of two ATP-binding proteins (MetN), two transmembrane proteins (MetI) and a solute-binding protein (MetQ).

The protein resides in the cell inner membrane. It catalyses the reaction L-methionine(out) + ATP + H2O = L-methionine(in) + ADP + phosphate + H(+). The catalysed reaction is D-methionine(out) + ATP + H2O = D-methionine(in) + ADP + phosphate + H(+). Part of the ABC transporter complex MetNIQ involved in methionine import. Responsible for energy coupling to the transport system. This Yersinia pestis bv. Antiqua (strain Nepal516) protein is Methionine import ATP-binding protein MetN 1.